The chain runs to 286 residues: Large ribosomal subunit protein uL2 (286 aa).

2 disordered regions span residues 22-59 (KELT…GGGH) and 215-286 (LGRR…KLHK). Basic and acidic residues predominate over residues 230–240 (DHPHGGGEGRT). A compositionally biased stretch (basic residues) spans 255 to 286 (KGGRTRQKRKPSNSSIVRRRKSRRYGQLKLHK).

Belongs to the universal ribosomal protein uL2 family. As to quaternary structure, part of the 50S ribosomal subunit. Forms a bridge to the 30S subunit in the 70S ribosome.

In terms of biological role, one of the primary rRNA binding proteins. Required for association of the 30S and 50S subunits to form the 70S ribosome, for tRNA binding and peptide bond formation. It has been suggested to have peptidyltransferase activity; this is somewhat controversial. Makes several contacts with the 16S rRNA in the 70S ribosome. In Rhodopirellula baltica (strain DSM 10527 / NCIMB 13988 / SH1), this protein is Large ribosomal subunit protein uL2.